A 273-amino-acid polypeptide reads, in one-letter code: Nickel permease LarQ (273 aa).

5 consecutive transmembrane segments (helical) span residues 64-84 (LIQLLLLVILIALSNNLILLW), 117-137 (MLFVLPSYWLAGPTTLLFFGL), 159-179 (LAGLKALHCPDLLIMTLAIAI), 210-230 (LIGALFGNLYLKSYTYALELY), and 251-271 (HWRDYLALSPAIIVWILFIFW).

Belongs to the CbiQ family. As to quaternary structure, may form an energy-coupling factor (ECF) transporter complex composed of an ATP-binding protein (A component, LarO), a transmembrane protein (T component, LarQ) and a fused possible substrate-capture protein (S component, LarMN) of unknown stoichiometry.

It localises to the cell membrane. Its function is as follows. Probable transmembrane component of the energy-coupling factor (ECF) transporter complex LarMNQO involved in nickel import. This chain is Nickel permease LarQ, found in Lactiplantibacillus plantarum (strain ATCC BAA-793 / NCIMB 8826 / WCFS1) (Lactobacillus plantarum).